Reading from the N-terminus, the 373-residue chain is Chaperone protein DnaJ (373 aa).

The J domain maps to 4–69 (DYYETLSVER…SKRRIYDTYG (66 aa)). The CR-type zinc-finger motif lies at 131 to 209 (GVSKEVKLSR…CHGEGLVKKT (79 aa)). The Zn(2+) site is built by C144, C147, C161, C164, C183, C186, C197, and C200. 4 CXXCXGXG motif repeats span residues 144 to 151 (CWTCEGTG), 161 to 168 (CPTCNGRG), 183 to 190 (CPECEGEG), and 197 to 204 (CNDCHGEG).

This sequence belongs to the DnaJ family. In terms of assembly, homodimer. Requires Zn(2+) as cofactor.

The protein resides in the cytoplasm. Participates actively in the response to hyperosmotic and heat shock by preventing the aggregation of stress-denatured proteins and by disaggregating proteins, also in an autonomous, DnaK-independent fashion. Unfolded proteins bind initially to DnaJ; upon interaction with the DnaJ-bound protein, DnaK hydrolyzes its bound ATP, resulting in the formation of a stable complex. GrpE releases ADP from DnaK; ATP binding to DnaK triggers the release of the substrate protein, thus completing the reaction cycle. Several rounds of ATP-dependent interactions between DnaJ, DnaK and GrpE are required for fully efficient folding. Also involved, together with DnaK and GrpE, in the DNA replication of plasmids through activation of initiation proteins. In Desulfotalea psychrophila (strain LSv54 / DSM 12343), this protein is Chaperone protein DnaJ.